A 167-amino-acid chain; its full sequence is Small ribosomal subunit protein uS5 (167 aa).

Residues 12-75 (LEDQVVSINR…DAAKKSLIEV (64 aa)) form the S5 DRBM domain.

It belongs to the universal ribosomal protein uS5 family. Part of the 30S ribosomal subunit. Contacts proteins S4 and S8.

With S4 and S12 plays an important role in translational accuracy. In terms of biological role, located at the back of the 30S subunit body where it stabilizes the conformation of the head with respect to the body. This Lacticaseibacillus paracasei (strain ATCC 334 / BCRC 17002 / CCUG 31169 / CIP 107868 / KCTC 3260 / NRRL B-441) (Lactobacillus paracasei) protein is Small ribosomal subunit protein uS5.